Reading from the N-terminus, the 209-residue chain is Thymidylate kinase (209 aa).

10 to 17 contributes to the ATP binding site; the sequence is GIDGCGKS.

It belongs to the thymidylate kinase family.

The catalysed reaction is dTMP + ATP = dTDP + ADP. In terms of biological role, phosphorylation of dTMP to form dTDP in both de novo and salvage pathways of dTTP synthesis. This is Thymidylate kinase from Synechococcus sp. (strain CC9902).